A 679-amino-acid chain; its full sequence is MDHLLLKTQTQIEQVMNVTNPNSIYIKGRLYFKGYKKIELHCFVDTGASLCIASKFVIPEEHWVNAERPIMVKIADGSSITISKVCKDIDLIIAGEIFKIPTVYQQESGIDFIIGNNFCQLYEPFIQFTDRVIFTKNKSYPVHITKLTRAVRVGIEGFLESMKKRSKTQQPEPVNISTNKIENPLEEIAILSEGRRLSEEKLFITQQRMQKIEELLEKVCSENPLDPNKTKQWMKASIKLSDPSKAIKVKPMKYSPMDREEFDKQIKELLDLKVIKPSKSPHMAPAFLVNNEAEKRRGKKRMVVNYKAMNKATIGDAYNLPNKDELLTLIRGKKIFSSFDCKSGFWQVLLDQESRPLTAFTCPQGHYEWNVVPFGLKQAPSIFQRHMDEAFRVFRKFCCVYVDDILVFSNNEEDHLLHVAMILQKCNQHGIILSKKKAQLFKKKINFLGLEIDEGTHKPQGHILEHINKFPDTLEDKKQLQRFLGILTYASDYIPKLAQIRKPLQAKLKENVPWKWTKEDTLYMQKVKKNLQGFPPLHHPLPEEKLIIETDASDDYWGGMLKAIKINEGTNTELICRYASGSFKAAERNYHSNDKETLAVINTIKKFSIYLTPVHFLIRTDNTHFKSFVNLNYKGDSKLGRNIRWQAWLSHYSFDVEHIKGTDNHFADFLSREFNKVNS.

Residues 40-130 (LHCFVDTGAS…LYEPFIQFTD (91 aa)) are protease. The active site involves Asp45. Positions 272–452 (LKVIKPSKSP…KKINFLGLEI (181 aa)) constitute a Reverse transcriptase domain.

This sequence belongs to the caulimoviridae enzymatic polyprotein family.

The catalysed reaction is DNA(n) + a 2'-deoxyribonucleoside 5'-triphosphate = DNA(n+1) + diphosphate. In terms of biological role, encodes for at least two polypeptides: protease (PR) and reverse transcriptase (RT). The protease processes the polyprotein in cis. Reverse transcriptase is multifunctional enzyme that converts the viral RNA genome into dsDNA in viral cytoplasmic capsids. This enzyme displays a DNA polymerase activity that can copy either DNA or RNA templates, and a ribonuclease H (RNase H) activity that cleaves the RNA strand of RNA-DNA heteroduplexes in a partially processive 3'- to 5'-endonucleasic mode. Neo-synthesized pregenomic RNA (pgRNA) are encapsidated, and reverse-transcribed inside the nucleocapsid. Partial (+)DNA is synthesized from the (-)DNA template and generates the relaxed circular DNA (RC-DNA) genome. After budding and infection, the RC-DNA migrates in the nucleus, and is converted into a plasmid-like covalently closed circular DNA (cccDNA). The polypeptide is Enzymatic polyprotein (Cauliflower mosaic virus (strain CM-1841) (CaMV)).